We begin with the raw amino-acid sequence, 351 residues long: Transmembrane protein 184 homolog DDB_G0279555 (351 aa).

The helical transmembrane segment at 1-21 (MWIVAGVCSGVAILLSFYLIY) threads the bilayer. N26 carries an N-linked (GlcNAc...) asparagine glycan. Transmembrane regions (helical) follow at residues 39-59 (ILIMVPIYSVDSWLSLRFVEL), 73-93 (YVLYCFFSLIVAYIERDFDLV), 127-147 (FVLQFVFIKPIVAIISLVLET), 162-182 (YVWLTVVENISVGLSLYFLVL), and 206-226 (ILFFSFWQSIAISFLVYFGVI). An N-linked (GlcNAc...) asparagine glycan is attached at N236. A helical membrane pass occupies residues 241-261 (LQDFITCVEMVILAICHHFFF). N-linked (GlcNAc...) asparagine glycans are attached at residues N301 and N304. A disordered region spans residues 327–351 (HNHPTTKKKDEESNLLEPEDKDIII). Over residues 339 to 351 (SNLLEPEDKDIII) the composition is skewed to acidic residues.

Belongs to the TMEM184 family.

It localises to the cell membrane. In terms of biological role, probable transporter. This is Transmembrane protein 184 homolog DDB_G0279555 (tmem184C) from Dictyostelium discoideum (Social amoeba).